The chain runs to 489 residues: Protein-export membrane protein SecD (489 aa).

6 helical membrane-spanning segments follow: residues 17–37 (VLIVLVLVILSVLSIYAIPPA), 328–348 (FIQIVCIAAAILGLLAVAFMV), 356–376 (SIVVPMILVNLSEIIILLGIA), 384–404 (LASIAGLIAVIGTGIDQLVVI), 428–448 (LGIITVSASTTIFAMLPLALM), and 450–470 (LSTLKGFAIITILGVLIGVIF).

The protein belongs to the SecD/SecF family. SecD subfamily. Part of the protein translocation apparatus. Forms a complex with SecF.

The protein resides in the cell membrane. Involved in protein export. This Methanolacinia petrolearia (strain DSM 11571 / OCM 486 / SEBR 4847) (Methanoplanus petrolearius) protein is Protein-export membrane protein SecD.